The sequence spans 335 residues: Holliday junction branch migration complex subunit RuvB (335 aa).

The large ATPase domain (RuvB-L) stretch occupies residues 1 to 181 (MERIIEIEKM…FGMNFWMQFY (181 aa)). Residues Leu-20, Arg-21, Gly-62, Lys-65, Thr-66, Thr-67, 128-130 (EDF), Arg-171, Tyr-181, and Arg-218 each bind ATP. Thr-66 contacts Mg(2+). The interval 182–252 (NIEELSQIIT…QARYALHELG (71 aa)) is small ATPAse domain (RuvB-S). Residues 255–335 (DHGFDDLDLR…LPFEPNATLF (81 aa)) form a head domain (RuvB-H) region. Residues Arg-309 and Arg-314 each contribute to the DNA site.

It belongs to the RuvB family. In terms of assembly, homohexamer. Forms an RuvA(8)-RuvB(12)-Holliday junction (HJ) complex. HJ DNA is sandwiched between 2 RuvA tetramers; dsDNA enters through RuvA and exits via RuvB. An RuvB hexamer assembles on each DNA strand where it exits the tetramer. Each RuvB hexamer is contacted by two RuvA subunits (via domain III) on 2 adjacent RuvB subunits; this complex drives branch migration. In the full resolvosome a probable DNA-RuvA(4)-RuvB(12)-RuvC(2) complex forms which resolves the HJ.

It is found in the cytoplasm. It catalyses the reaction ATP + H2O = ADP + phosphate + H(+). Its function is as follows. The RuvA-RuvB-RuvC complex processes Holliday junction (HJ) DNA during genetic recombination and DNA repair, while the RuvA-RuvB complex plays an important role in the rescue of blocked DNA replication forks via replication fork reversal (RFR). RuvA specifically binds to HJ cruciform DNA, conferring on it an open structure. The RuvB hexamer acts as an ATP-dependent pump, pulling dsDNA into and through the RuvAB complex. RuvB forms 2 homohexamers on either side of HJ DNA bound by 1 or 2 RuvA tetramers; 4 subunits per hexamer contact DNA at a time. Coordinated motions by a converter formed by DNA-disengaged RuvB subunits stimulates ATP hydrolysis and nucleotide exchange. Immobilization of the converter enables RuvB to convert the ATP-contained energy into a lever motion, pulling 2 nucleotides of DNA out of the RuvA tetramer per ATP hydrolyzed, thus driving DNA branch migration. The RuvB motors rotate together with the DNA substrate, which together with the progressing nucleotide cycle form the mechanistic basis for DNA recombination by continuous HJ branch migration. Branch migration allows RuvC to scan DNA until it finds its consensus sequence, where it cleaves and resolves cruciform DNA. In Wolinella succinogenes (strain ATCC 29543 / DSM 1740 / CCUG 13145 / JCM 31913 / LMG 7466 / NCTC 11488 / FDC 602W) (Vibrio succinogenes), this protein is Holliday junction branch migration complex subunit RuvB.